The chain runs to 825 residues: PR domain zinc finger protein 1 (825 aa).

The 118-residue stretch at 84–201 folds into the SET domain; it reads PRNLLFKYAT…ANQELLVWYC (118 aa). The span at 324–361 shows a compositional bias: low complexity; the sequence is ITRSPIPSSTTPSPSARSSPDQSLKSSSPHSSPGNTVS. The segment at 324–369 is disordered; that stretch reads ITRSPIPSSTTPSPSARSSPDQSLKSSSPHSSPGNTVSPVGPGSQE. The tract at residues 527 to 574 is interaction with PIAS1; that stretch reads HVVQPKATSAAMAAPSSDEAMNLIKNKRNMTGYKTLPYPLKKQNGKIK. 4 consecutive C2H2-type zinc fingers follow at residues 575 to 597, 603 to 625, 631 to 653, and 659 to 681; these read YECN…LRVH, FKCQ…YLVH, HECQ…LRLH, and YQCK…KRLH. Lys816 is covalently cross-linked (Glycyl lysine isopeptide (Lys-Gly) (interchain with G-Cter in SUMO1); alternate). A Glycyl lysine isopeptide (Lys-Gly) (interchain with G-Cter in SUMO2); alternate cross-link involves residue Lys816.

It belongs to the class V-like SAM-binding methyltransferase superfamily. As to quaternary structure, interacts with PRMT5. Interacts with FBXO10. Interacts with FBXO11. Interacts with multiple nuclear sumoylation E3 ligases, including CBX4, PIAS1, PIAS2, PIAS3, PIAS4, PML and RNF4, but not RANBP2. Interacts with LDB1, SMARCD3 and SMARCC1. Interacts with EEIG1; following TNFSF11/RANKL stimulation in bone marrow-derived macrophages, the interaction promotes the binding of PRDM1/BLIMP1 to the gene promoter of IRF8. Post-translationally, sumoylation at Lys-816 by PIAS1 augments transcriptional repressor activity, and is critical for plasma cell differentiation. Can be sumoylated with SUMO1 and SUMO2 by PML. Degradation of the wild-type protein mostly depends upon sumoylation, rather than ubiquitination. Desumoylated by SENP1 and SENP6. Ubiquitinated by the SCF(FBXO11) complex, leading to its degradation by the proteasome.

The protein resides in the nucleus. Its subcellular location is the cytoplasm. Its function is as follows. Transcription factor that mediates a transcriptional program in various innate and adaptive immune tissue-resident lymphocyte T cell types such as tissue-resident memory T (Trm), natural killer (trNK) and natural killer T (NKT) cells and negatively regulates gene expression of proteins that promote the egress of tissue-resident T-cell populations from non-lymphoid organs. Plays a role in the development, retention and long-term establishment of adaptive and innate tissue-resident lymphocyte T cell types in non-lymphoid organs, such as the skin and gut, but also in other nonbarrier tissues like liver and kidney, and therefore may provide immediate immunological protection against reactivating infections or viral reinfection. Binds specifically to the PRDI element in the promoter of the beta-interferon gene. Drives the maturation of B-lymphocytes into Ig secreting cells. Associates with the transcriptional repressor ZNF683 to chromatin at gene promoter regions. Binds to the promoter and acts as a transcriptional repressor of IRF8, thereby promotes transcription of osteoclast differentiation factors such as NFATC1 and EEIG1. This is PR domain zinc finger protein 1 (PRDM1) from Homo sapiens (Human).